The following is a 1134-amino-acid chain: ATP-dependent helicase/deoxyribonuclease subunit B (1134 aa).

G8 to S15 lines the ATP pocket. Positions 771, 1089, 1092, and 1098 each coordinate [4Fe-4S] cluster.

It belongs to the helicase family. AddB/RexB type 1 subfamily. In terms of assembly, heterodimer of AddA and AddB. It depends on Mg(2+) as a cofactor. [4Fe-4S] cluster serves as cofactor.

In terms of biological role, the heterodimer acts as both an ATP-dependent DNA helicase and an ATP-dependent, dual-direction single-stranded exonuclease. Recognizes the chi site generating a DNA molecule suitable for the initiation of homologous recombination. The AddB subunit has 5' -&gt; 3' nuclease activity but not helicase activity. The polypeptide is ATP-dependent helicase/deoxyribonuclease subunit B (Clostridium novyi (strain NT)).